The chain runs to 1690 residues: Restin homolog (1690 aa).

Polar residues-rich tracts occupy residues 1 to 11 and 39 to 51; these read MSDDTSASGGT and NIPTPATSGTGIP. The segment at 1-105 is disordered; the sequence is MSDDTSASGG…ESDDNLSSIN (105 aa). 2 positions are modified to phosphoserine: Ser-64 and Ser-67. The region spanning 143 to 185 is the CAP-Gly 1 domain; it reads GDTHFAAGEWAGVVLDEPNGKNDGCVSGKRYFQCEPKRGIFSR. Residues 195–227 form a disordered region; that stretch reads AGAQTPTSPLAKSSPDRSRTVSPTASIRSSMLR. Polar residues predominate over residues 214-226; that stretch reads TVSPTASIRSSML. Phosphoserine is present on Ser-216. A CAP-Gly 2 domain is found at 260–302; sequence GETQFAPGNWCGVELDEPSGKNDGTVDDIRYFECKPKYGVFVP. Residues Ser-309, Ser-322, and Ser-325 each carry the phosphoserine modification. Thr-327 bears the Phosphothreonine mark. Residue Ser-328 is modified to Phosphoserine. The residue at position 362 (Thr-362) is a Phosphothreonine. Coiled coils occupy residues 378 to 468, 484 to 660, 667 to 916, 926 to 981, 1001 to 1121, 1158 to 1549, and 1565 to 1600; these read QHVE…VSAT, GALQ…DMLR, EEKS…TKLK, LSSC…ELQA, ATGH…EAIQ, EADM…AQMN, and DIETSLAKINFLNSIIADMQQKNDALKAKVQTLETL. Residues 843 to 905 form a disordered region; it reads QQAAASGEEG…GSLEEEAKKS (63 aa). Over residues 865–885 the composition is skewed to polar residues; that stretch reads QLKSQAEETQSELKSTQSNLE. Disordered regions lie at residues 1031–1052 and 1400–1419; these read QLQDSQDSQTKLKAEGERKEKS and KLDESNTVLESQKKSHNEIQ. Composition is skewed to basic and acidic residues over residues 1040–1052 and 1410–1419; these read TKLKAEGERKEKS and SQKKSHNEIQ. The segment at 1635–1665 is disordered; the sequence is TEDCPIQGSEDQDYSTPSSESNNNEKERKLP. The residue at position 1681 (Thr-1681) is a Phosphothreonine. Position 1682 is a phosphoserine (Ser-1682).

Interacts with Lva. In terms of tissue distribution, specifically expressed at the tip of the furrow in cellularizing blastoderms. CLIP-190 and jar are coexpressed at several times in development and in a number of tissues, including embryonic axonal neuron processes and posterior pole.

It localises to the cytoplasm. The protein localises to the cytoskeleton. The protein resides in the golgi apparatus. It is found in the microtubule organizing center. Its subcellular location is the perinuclear region. Together CLIP-190 and jar may coordinate the interaction between the actin and microtubule cytoskeleton. May link endocytic vesicles to microtubules. May play a role in formation of furrows during cellularization. This chain is Restin homolog (CLIP-190), found in Drosophila melanogaster (Fruit fly).